Reading from the N-terminus, the 626-residue chain is Solute carrier family 13 member 4 (626 aa).

The next 4 helical transmembrane spans lie at 13-33 (LLLV…HPSS), 52-72 (AVPL…FGVL), 77-97 (VAAE…CVAA), and 113-133 (VLMA…CTTL). A compositionally biased stretch (polar residues) spans 217–228 (SITNPIKTANQH). The disordered stretch occupies residues 217–252 (SITNPIKTANQHQGKKQHPSQEKPQVLTPSPRKQKL). The next 8 membrane-spanning stretches (helical) occupy residues 274 to 294 (YSAT…LIFL), 309 to 329 (FGTW…VSWF), 372 to 392 (ISYP…LWFT), 414 to 434 (ATVS…KPCF), 466 to 486 (IVIL…SGLS), 499 to 519 (LPPW…TEFV), 543 to 563 (PLYT…LPVG), and 590 to 610 (VIGL…LFHL).

It belongs to the SLC13A/DASS transporter (TC 2.A.47) family. NADC subfamily. In terms of tissue distribution, highly expressed in placenta and testis with intermediate levels in brain and lower levels in heart, thymus and liver.

The protein localises to the membrane. The enzyme catalyses sulfate(out) + 3 Na(+)(out) = sulfate(in) + 3 Na(+)(in). Transport is inhibited by thiosulfate, phosphate, molybdate, selenate and tungstate. Not inhibited by oxalate, citrate, succinate, phenol red or 4,4'-diisothiocyanostilbene-2,2'-disulfonic acid (DIDS). Its function is as follows. Sodium:sulfate symporter that mediates sulfate reabsorption in the high endothelial venules (HEV). The polypeptide is Solute carrier family 13 member 4 (SLC13A4) (Homo sapiens (Human)).